The chain runs to 94 residues: Large ribosomal subunit protein uL23 (94 aa).

It belongs to the universal ribosomal protein uL23 family. As to quaternary structure, part of the 50S ribosomal subunit. Contacts protein L29, and trigger factor when it is bound to the ribosome.

One of the early assembly proteins it binds 23S rRNA. One of the proteins that surrounds the polypeptide exit tunnel on the outside of the ribosome. Forms the main docking site for trigger factor binding to the ribosome. This chain is Large ribosomal subunit protein uL23, found in Geobacter sp. (strain M21).